The sequence spans 427 residues: Serine--tRNA ligase (427 aa).

L-serine is bound at residue 231–233; the sequence is TAE. Residues 262–264 and Val-278 each bind ATP; that span reads RRE. Residue Glu-285 participates in L-serine binding. Position 349-352 (349-352) interacts with ATP; sequence EVSS. Ser-384 provides a ligand contact to L-serine.

Belongs to the class-II aminoacyl-tRNA synthetase family. Type-1 seryl-tRNA synthetase subfamily. As to quaternary structure, homodimer. The tRNA molecule binds across the dimer.

The protein localises to the cytoplasm. The catalysed reaction is tRNA(Ser) + L-serine + ATP = L-seryl-tRNA(Ser) + AMP + diphosphate + H(+). The enzyme catalyses tRNA(Sec) + L-serine + ATP = L-seryl-tRNA(Sec) + AMP + diphosphate + H(+). The protein operates within aminoacyl-tRNA biosynthesis; selenocysteinyl-tRNA(Sec) biosynthesis; L-seryl-tRNA(Sec) from L-serine and tRNA(Sec): step 1/1. Its function is as follows. Catalyzes the attachment of serine to tRNA(Ser). Is also able to aminoacylate tRNA(Sec) with serine, to form the misacylated tRNA L-seryl-tRNA(Sec), which will be further converted into selenocysteinyl-tRNA(Sec). This is Serine--tRNA ligase from Chlamydia pneumoniae (Chlamydophila pneumoniae).